A 377-amino-acid polypeptide reads, in one-letter code: MTTQFSVAGIELELFRYPASQESNLQAWDAADEHLINSLIEGGQIAVPTAIINDSFGALSCALSRINPNWPLRVETDARTSFLGTEQNHHRNQLPMDNLQWFTSRDTLPKDVALVLMKLPKNLTYFAHQLMRLSQILPAGCRVLVGAKAKSINSSLLALFAKHLGPANASLAWKKTRVITCISDGKPRALPNGITWNIPEFNLTISNLSNVFAANKLDIGARIMLDNLPQGKFNTVVDLGCGNGVLGLRAAQLYPNADIHFIDDSEMAVASAKANWTMNQLAEGKGHFHWDDCMTHLPEDIEPDLVLCNPPFHQGEAITDHIAWQMFLDARRRLKNGGILHIVGNRHLAYHVKLQRLFKNCTTVASNGKFVILQAQK.

It belongs to the methyltransferase superfamily. RlmG family.

The protein resides in the cytoplasm. The enzyme catalyses guanosine(1835) in 23S rRNA + S-adenosyl-L-methionine = N(2)-methylguanosine(1835) in 23S rRNA + S-adenosyl-L-homocysteine + H(+). In terms of biological role, specifically methylates the guanine in position 1835 (m2G1835) of 23S rRNA. The polypeptide is Ribosomal RNA large subunit methyltransferase G (Shewanella oneidensis (strain ATCC 700550 / JCM 31522 / CIP 106686 / LMG 19005 / NCIMB 14063 / MR-1)).